The chain runs to 101 residues: MSSTLIVQLDMRTLCQEADITADYVVEIVEHGIVEPSGRTPEEWLFDDQAPLLARRAAKLHQELELEWEGVALALELLQEVQQLRSENSMLKQRLGRFTQM.

This sequence belongs to the CbpM family.

In terms of biological role, interacts with CbpA and inhibits both the DnaJ-like co-chaperone activity and the DNA binding activity of CbpA. Together with CbpA, modulates the activity of the DnaK chaperone system. Does not inhibit the co-chaperone activity of DnaJ. The chain is Chaperone modulatory protein CbpM from Pseudomonas putida (strain W619).